The sequence spans 364 residues: Chorismate synthase (364 aa).

The disordered stretch occupies residues 41 to 60; it reads MQHDLDRRRPGTSRYTTARR. Arg-48 and Arg-54 together coordinate NADP(+). FMN is bound by residues 125-127, 238-239, Gly-278, 293-297, and Arg-319; these read RSS, NA, and KPTSS.

It belongs to the chorismate synthase family. Homotetramer. The cofactor is FMNH2.

It catalyses the reaction 5-O-(1-carboxyvinyl)-3-phosphoshikimate = chorismate + phosphate. It functions in the pathway metabolic intermediate biosynthesis; chorismate biosynthesis; chorismate from D-erythrose 4-phosphate and phosphoenolpyruvate: step 7/7. Its function is as follows. Catalyzes the anti-1,4-elimination of the C-3 phosphate and the C-6 proR hydrogen from 5-enolpyruvylshikimate-3-phosphate (EPSP) to yield chorismate, which is the branch point compound that serves as the starting substrate for the three terminal pathways of aromatic amino acid biosynthesis. This reaction introduces a second double bond into the aromatic ring system. This is Chorismate synthase from Shewanella baltica (strain OS223).